Here is a 396-residue protein sequence, read N- to C-terminus: S-adenosylmethionine synthase (396 aa).

Position 16 (histidine 16) interacts with ATP. A Mg(2+)-binding site is contributed by aspartate 18. Glutamate 44 is a K(+) binding site. L-methionine contacts are provided by glutamate 57 and glutamine 100. Positions 100-110 (QSVDIAQGVDR) are flexible loop. ATP is bound by residues 165 to 167 (DAK), aspartate 240, 246 to 247 (RK), alanine 263, and lysine 267. Aspartate 240 provides a ligand contact to L-methionine. Residue lysine 271 coordinates L-methionine.

This sequence belongs to the AdoMet synthase family. In terms of assembly, homotetramer; dimer of dimers. Requires Mg(2+) as cofactor. K(+) is required as a cofactor.

It is found in the cytoplasm. It carries out the reaction L-methionine + ATP + H2O = S-adenosyl-L-methionine + phosphate + diphosphate. It functions in the pathway amino-acid biosynthesis; S-adenosyl-L-methionine biosynthesis; S-adenosyl-L-methionine from L-methionine: step 1/1. In terms of biological role, catalyzes the formation of S-adenosylmethionine (AdoMet) from methionine and ATP. The overall synthetic reaction is composed of two sequential steps, AdoMet formation and the subsequent tripolyphosphate hydrolysis which occurs prior to release of AdoMet from the enzyme. In Pseudomonas syringae pv. tomato (strain ATCC BAA-871 / DC3000), this protein is S-adenosylmethionine synthase.